Consider the following 931-residue polypeptide: Neuropilin-2 (931 aa).

Residues 1 to 20 constitute a signal peptide (or 22); sequence MDMFPLTWVFLALYFSRHQV. At 21-864 the chain is on the extracellular side; it reads RGQPDPPCGG…EKSWLYTLDP (844 aa). Disulfide bonds link C28/C55, C83/C105, and C149/C175. 2 CUB domains span residues 28 to 142 and 149 to 267; these read CGGR…YEIF and CSKN…YYLV. 2 N-linked (GlcNAc...) asparagine glycosylation sites follow: N152 and N157. Ca(2+)-binding residues include E197, D211, and D252. A disulfide bridge links C208 with C230. 2 disulfides stabilise this stretch: C277-C427 and C434-C592. F5/8 type C domains are found at residues 277–427 and 434–592; these read CNVP…LFGC and CSNM…VLGC. The span at 298-310 shows a compositional bias: polar residues; the sequence is TYSDGRWTPQQSR. Residues 298 to 317 are disordered; sequence TYSDGRWTPQQSRLHGDDNG. A disordered region spans residues 601–622; that stretch reads VETLGPTVKSEETTTPYPTEEE. N-linked (GlcNAc...) asparagine glycosylation occurs at N629. The MAM domain maps to 642–802; the sequence is SGFNCNFDFL…TDVPLENCME (161 aa). N-linked (GlcNAc...) asparagine glycosylation is present at N839. The helical transmembrane segment at 865–889 threads the bilayer; the sequence is ILITIIAMSSLGVLLGATCAGLLLY. The Cytoplasmic segment spans residues 890–931; the sequence is CTCSYSGLSSRSCTTLENYNFELYDGLKHKVKMNHQKCCSEA.

It belongs to the neuropilin family. In terms of assembly, heterodimer with NRP1. Binds PLXNB1. As to quaternary structure, (Microbial infection) Interacts with human cytomegalovirus proteins gL, UL128, UL130 and UL131A.

It is found in the membrane. The protein resides in the secreted. High affinity receptor for semaphorins 3C, 3F, VEGF-165 and VEGF-145 isoforms of VEGF, and the PLGF-2 isoform of PGF. Functionally, (Microbial infection) Acts as a receptor for human cytomegalovirus pentamer-dependent entry in epithelial and endothelial cells. The chain is Neuropilin-2 (NRP2) from Homo sapiens (Human).